A 197-amino-acid chain; its full sequence is RILP-like protein 2 (197 aa).

An RH1 domain is found at 14–96 (EDEGALAKSP…KQEVEGLRRA (83 aa)). Residues 65–153 (LEALVNEGSL…VQEELQCYRS (89 aa)) are a coiled coil. Positions 119–184 (RPRFTLQELR…GNGEKEERTI (66 aa)) constitute an RH2 domain.

In terms of assembly, homodimer. Interacts (via N-terminus) with MYO5A, the interaction is required for its role in dendrite formation. Interacts with RAC1. Interacts with RAB8A; interaction is dependent on the phosphorylation of RAB8A on 'Thr-72'. Interacts with RAB10 and RAB12; interaction is dependent on the phosphorylation of 'Thr-73' on RAB10 and 'Ser-105' on RAB12.

It localises to the cytoplasm. The protein resides in the cytosol. The protein localises to the cytoskeleton. It is found in the microtubule organizing center. Its subcellular location is the centrosome. It localises to the cell projection. The protein resides in the cilium. Involved in cell shape and neuronal morphogenesis, positively regulating the establishment and maintenance of dendritic spines. Plays a role in cellular protein transport, including protein transport away from primary cilia. May function via activation of RAC1 and PAK1. The sequence is that of RILP-like protein 2 (Rilpl2) from Rattus norvegicus (Rat).